The primary structure comprises 517 residues: Amidophosphoribosyltransferase (517 aa).

N-acetylmethionine is present on methionine 1. Residues 1–11 (MELEELGIREE) constitute a propeptide that is removed on maturation. The Nucleophile role is filled by cysteine 12. The Glutamine amidotransferase type-2 domain maps to 12-261 (CGVFGCIASG…PGEIVEISRH (250 aa)). Cysteine 280 lines the [4Fe-4S] cluster pocket. Residues serine 327, aspartate 389, and aspartate 390 each contribute to the Mg(2+) site. Residues cysteine 426, cysteine 503, and cysteine 506 each coordinate [4Fe-4S] cluster.

It in the C-terminal section; belongs to the purine/pyrimidine phosphoribosyltransferase family. Homotetramer. It depends on Mg(2+) as a cofactor. Requires [4Fe-4S] cluster as cofactor. As to expression, ubiquitously expressed.

It carries out the reaction 5-phospho-beta-D-ribosylamine + L-glutamate + diphosphate = 5-phospho-alpha-D-ribose 1-diphosphate + L-glutamine + H2O. The protein operates within purine metabolism; IMP biosynthesis via de novo pathway; N(1)-(5-phospho-D-ribosyl)glycinamide from 5-phospho-alpha-D-ribose 1-diphosphate: step 1/2. Functionally, catalyzes the formation of phosphoribosylamine from phosphoribosylpyrophosphate (PRPP) and glutamine. The sequence is that of Amidophosphoribosyltransferase (PPAT) from Homo sapiens (Human).